Reading from the N-terminus, the 263-residue chain is HLA class II histocompatibility antigen, DM beta chain (263 aa).

The first 18 residues, 1–18 (MITFLPLLLGLSLGCTGA), serve as a signal peptide directing secretion. Positions 19 to 112 (GGFVAHVEST…PFWGSLTNRT (94 aa)) are beta-1. Residues 19–218 (GGFVAHVEST…PGLSPMQTLK (200 aa)) lie on the Lumenal side of the membrane. 2 disulfide bridges follow: Cys-29–Cys-97 and Cys-43–Cys-53. An N-linked (GlcNAc...) asparagine glycan is attached at Asn-110. The interval 113 to 207 (RPPSVQVAKT…GAPEPILRDW (95 aa)) is beta-2. Positions 114–208 (PPSVQVAKTT…APEPILRDWT (95 aa)) constitute an Ig-like C1-type domain. Cys-135 and Cys-192 are disulfide-bonded. The segment at 208–218 (TPGLSPMQTLK) is connecting peptide. Residues 219–239 (VSVSAVTLGLGLIIFSLGVIS) form a helical membrane-spanning segment. The Cytoplasmic segment spans residues 240–263 (WRRAGHSSYTPLPGSNYSEGWHIS). The YXXZ motif signature appears at 248-251 (YTPL).

This sequence belongs to the MHC class II family. Heterodimer of an alpha chain (DMA) and a beta chain (DMB). Interacts with MHCII; this interaction mediates rapid selection of high-affinity peptides in a pH-dependent manner, with an optimum at pH 5.5.

It is found in the late endosome membrane. It localises to the lysosome membrane. Functionally, plays a critical role in catalyzing the release of class II-associated invariant chain peptide (CLIP) from newly synthesized MHC class II molecules and freeing the peptide binding site for acquisition of antigenic peptides. In B-cells, the interaction between HLA-DM and MHC class II molecules is regulated by HLA-DO. The sequence is that of HLA class II histocompatibility antigen, DM beta chain (HLA-DMB) from Homo sapiens (Human).